Consider the following 282-residue polypeptide: Shikimate dehydrogenase (NADP(+)) (282 aa).

Residues 15–17 (SKS) and threonine 62 each bind shikimate. Catalysis depends on lysine 66, which acts as the Proton acceptor. Positions 87 and 103 each coordinate shikimate. Residues 127 to 131 (GAGGA), 151 to 156 (NRTHTK), and methionine 220 each bind NADP(+). Tyrosine 222 serves as a coordination point for shikimate. An NADP(+)-binding site is contributed by glycine 244.

The protein belongs to the shikimate dehydrogenase family. As to quaternary structure, homodimer.

The enzyme catalyses shikimate + NADP(+) = 3-dehydroshikimate + NADPH + H(+). The protein operates within metabolic intermediate biosynthesis; chorismate biosynthesis; chorismate from D-erythrose 4-phosphate and phosphoenolpyruvate: step 4/7. Functionally, involved in the biosynthesis of the chorismate, which leads to the biosynthesis of aromatic amino acids. Catalyzes the reversible NADPH linked reduction of 3-dehydroshikimate (DHSA) to yield shikimate (SA). This chain is Shikimate dehydrogenase (NADP(+)), found in Shewanella baltica (strain OS223).